A 130-amino-acid chain; its full sequence is Sec-independent protein translocase protein TatB (130 aa).

A helical transmembrane segment spans residues 2–22 (FANIGWGEMLVLVVVGLVVLG). The tract at residues 108 to 130 (DAVASAQEAPDEPVRPPFDSDAT) is disordered.

It belongs to the TatB family. The Tat system comprises two distinct complexes: a TatABC complex, containing multiple copies of TatA, TatB and TatC subunits, and a separate TatA complex, containing only TatA subunits. Substrates initially bind to the TatABC complex, which probably triggers association of the separate TatA complex to form the active translocon.

It localises to the cell membrane. Its function is as follows. Part of the twin-arginine translocation (Tat) system that transports large folded proteins containing a characteristic twin-arginine motif in their signal peptide across membranes. Together with TatC, TatB is part of a receptor directly interacting with Tat signal peptides. TatB may form an oligomeric binding site that transiently accommodates folded Tat precursor proteins before their translocation. The polypeptide is Sec-independent protein translocase protein TatB (Mycobacterium ulcerans (strain Agy99)).